Reading from the N-terminus, the 827-residue chain is uncharacterized protein (827 aa).

Positions 12-82 (FDADFEAILN…DMDIGVLSTG (71 aa)) constitute a PAS 1 domain. Residues 212–264 (LDVEFRLAAAEGGYSWYRSRAATRRAEDGSILRWYGTVEDIDDRRKMFEALKE) form the PAC 1 domain. In terms of domain architecture, PAS 2 spans 265 to 335 (SEARFRAIAD…RVFYQAFDLR (71 aa)). Residues 338–390 (VRMEYRLKRAGGGSAWVIDIGQPRFASDGTFLGFVGIALDITERRNAEQERLL) enclose the PAC 2 domain. The GGDEF domain maps to 428–561 (TRLAILCLDL…GGGTIVQYEP (134 aa)). The region spanning 570–820 (RQRMKVSLRH…QAMALLKSRS (251 aa)) is the EAL domain.

This is an uncharacterized protein from Sinorhizobium fredii (strain NBRC 101917 / NGR234).